A 481-amino-acid polypeptide reads, in one-letter code: Halobacterial transducer protein 9 (481 aa).

Residues 10 to 81 (SPFTVPLLLN…NKVADTPIDA (72 aa)) form the PAS domain. Residues 208 to 444 (DVERLEAASQ…EIAAMVDETA (237 aa)) form the Methyl-accepting transducer domain.

The protein belongs to the methyl-accepting chemotaxis (MCP) protein family.

The protein localises to the cytoplasm. Its function is as follows. Potentially involved in chemo- or phototactic signal transduction. In Halobacterium salinarum (strain ATCC 700922 / JCM 11081 / NRC-1) (Halobacterium halobium), this protein is Halobacterial transducer protein 9 (htr9).